The following is a 172-amino-acid chain: Protein-export protein SecB (172 aa).

The tract at residues 152–172 (AQGAEGGNSGIVMPDGSQARH) is disordered.

The protein belongs to the SecB family. Homotetramer, a dimer of dimers. One homotetramer interacts with 1 SecA dimer.

It is found in the cytoplasm. Its function is as follows. One of the proteins required for the normal export of preproteins out of the cell cytoplasm. It is a molecular chaperone that binds to a subset of precursor proteins, maintaining them in a translocation-competent state. It also specifically binds to its receptor SecA. This Cupriavidus taiwanensis (strain DSM 17343 / BCRC 17206 / CCUG 44338 / CIP 107171 / LMG 19424 / R1) (Ralstonia taiwanensis (strain LMG 19424)) protein is Protein-export protein SecB.